Here is a 235-residue protein sequence, read N- to C-terminus: Ubiquinone/menaquinone biosynthesis C-methyltransferase UbiE (235 aa).

T59, D84, and S123 together coordinate S-adenosyl-L-methionine.

The protein belongs to the class I-like SAM-binding methyltransferase superfamily. MenG/UbiE family.

The enzyme catalyses a 2-demethylmenaquinol + S-adenosyl-L-methionine = a menaquinol + S-adenosyl-L-homocysteine + H(+). It catalyses the reaction a 2-methoxy-6-(all-trans-polyprenyl)benzene-1,4-diol + S-adenosyl-L-methionine = a 5-methoxy-2-methyl-3-(all-trans-polyprenyl)benzene-1,4-diol + S-adenosyl-L-homocysteine + H(+). The protein operates within quinol/quinone metabolism; menaquinone biosynthesis; menaquinol from 1,4-dihydroxy-2-naphthoate: step 2/2. It participates in cofactor biosynthesis; ubiquinone biosynthesis. Functionally, methyltransferase required for the conversion of demethylmenaquinol (DMKH2) to menaquinol (MKH2) and the conversion of 2-polyprenyl-6-methoxy-1,4-benzoquinol (DDMQH2) to 2-polyprenyl-3-methyl-6-methoxy-1,4-benzoquinol (DMQH2). The chain is Ubiquinone/menaquinone biosynthesis C-methyltransferase UbiE from Campylobacter jejuni subsp. jejuni serotype O:23/36 (strain 81-176).